The following is a 164-amino-acid chain: MPDLRWKAYGVAALIFALDRFTKWLVETNVSVMDTYHVIPGFFDIVHSENRGVAFGILNDSTSEWRTTILVVLAGAAVIFIAAMLWNAQRLDRASFWGLSLILGGAAGNVFDRAMFGKVTDFLDLYYRDYHWHTFNVADSAIVVGSCLLLIDLLRPKRQAANVS.

Helical transmembrane passes span 68–88 and 96–116; these read TILV…LWNA and FWGL…RAMF. Active-site residues include D121 and D139. Residues 134 to 154 traverse the membrane as a helical segment; sequence TFNVADSAIVVGSCLLLIDLL.

It belongs to the peptidase A8 family.

The protein resides in the cell inner membrane. It catalyses the reaction Release of signal peptides from bacterial membrane prolipoproteins. Hydrolyzes -Xaa-Yaa-Zaa-|-(S,diacylglyceryl)Cys-, in which Xaa is hydrophobic (preferably Leu), and Yaa (Ala or Ser) and Zaa (Gly or Ala) have small, neutral side chains.. The protein operates within protein modification; lipoprotein biosynthesis (signal peptide cleavage). In terms of biological role, this protein specifically catalyzes the removal of signal peptides from prolipoproteins. The protein is Lipoprotein signal peptidase of Solibacter usitatus (strain Ellin6076).